Here is a 342-residue protein sequence, read N- to C-terminus: tRNA dimethylallyltransferase (342 aa).

Residues M1–G30 form a disordered region. The segment covering A19–G30 has biased composition (gly residues). Residue G49–S56 participates in ATP binding. T51–S56 contacts substrate. Residues D74 to Q77 are interaction with substrate tRNA.

It belongs to the IPP transferase family. Monomer. Mg(2+) is required as a cofactor.

The enzyme catalyses adenosine(37) in tRNA + dimethylallyl diphosphate = N(6)-dimethylallyladenosine(37) in tRNA + diphosphate. Its function is as follows. Catalyzes the transfer of a dimethylallyl group onto the adenine at position 37 in tRNAs that read codons beginning with uridine, leading to the formation of N6-(dimethylallyl)adenosine (i(6)A). The chain is tRNA dimethylallyltransferase from Salinispora arenicola (strain CNS-205).